The chain runs to 312 residues: MPLSSRMPGLTCFEIFLAIAEAGSLGGAARELGLTQQAVSRRLASMEAQIGVRLAIRTTRGSQLTPAGIVVAEWAARLLEVADEIDAGLGSLRTEGRQRIRVVASQTIAEQLMPHWMLSLRAADMRRGGTVPEVILTATNSEHAIAAVRDGIADLGFIENPCPPTGLGSVVVARDELVVVVPPGHKWARRSRVVSARELAQTPLVTREPNSGIRDSLTAALRDTLGEDMQQAPPVLELSSAAAVRAAVLAGAGPAAMSRLAIADDLAFGRLLAVDIPALNLRRQLRAIWVGGRTPPAGAIRDLLSHITSRST.

The region spanning 8–65 (PGLTCFEIFLAIAEAGSLGGAARELGLTQQAVSRRLASMEAQIGVRLAIRTTRGSQLT) is the HTH lysR-type domain. The H-T-H motif DNA-binding region spans 25–45 (LGGAARELGLTQQAVSRRLAS).

The protein belongs to the LysR transcriptional regulatory family.

This is an uncharacterized protein from Mycobacterium tuberculosis (strain CDC 1551 / Oshkosh).